The sequence spans 396 residues: Decapping and exoribonuclease protein (396 aa).

Positions 1–20 (MDPRGTKRGAEKTEVAEPRN) are enriched in basic and acidic residues. The segment at 1–37 (MDPRGTKRGAEKTEVAEPRNKLPRPAPSLPTDPALYS) is disordered. Substrate contacts are provided by residues Arg58, Glu101, and 131 to 133 (WRG). Residue Glu192 coordinates Mg(2+). Positions 217 and 234 each coordinate substrate. Mg(2+)-binding residues include Glu234, Asp236, Glu253, and Leu254. Substrate-binding residues include Lys255 and Gln280. At Thr392 the chain carries Phosphothreonine. Ser394 carries the post-translational modification Phosphoserine.

It belongs to the DXO/Dom3Z family. Requires Mg(2+) as cofactor. In terms of tissue distribution, ubiquitously expressed.

Its subcellular location is the nucleus. The catalysed reaction is a 5'-end triphospho-ribonucleoside in mRNA + H2O = a 5'-end phospho-ribonucleoside in mRNA + diphosphate + H(+). It carries out the reaction a 5'-end NAD(+)-phospho-ribonucleoside in mRNA + H2O = a 5'-end phospho-ribonucleoside in mRNA + NAD(+) + H(+). It catalyses the reaction a 5'-end NAD(+)-phospho-ribonucleoside in snoRNA + H2O = a 5'-end phospho-ribonucleoside in snoRNA + NAD(+) + H(+). The enzyme catalyses a 5'-end (N(7)-methyl 5'-triphosphoguanosine)-ribonucleoside-ribonucleotide in mRNA + H2O = a (N(7)-methyl 5'-triphosphoguanosine)-nucleoside + a 5'-end phospho-ribonucleoside in mRNA + H(+). The catalysed reaction is a 5'-end FAD-phospho-ribonucleoside in mRNA + H2O = a 5'-end phospho-ribonucleoside in mRNA + FAD + H(+). It carries out the reaction a 5'-end CoA-ribonucleoside in mRNA + H2O = 3'-dephospho-CoA + a 5'-end phospho-ribonucleoside in mRNA + H(+). Functionally, decapping enzyme for NAD-capped RNAs: specifically hydrolyzes the nicotinamide adenine dinucleotide (NAD) cap from a subset of RNAs by removing the entire NAD moiety from the 5'-end of an NAD-capped RNA. The NAD-cap is present at the 5'-end of some RNAs and snoRNAs. In contrast to the canonical 5'-end N7 methylguanosine (m7G) cap, the NAD cap promotes mRNA decay. Preferentially acts on NAD-capped transcripts in response to environmental stress. Also acts as a non-canonical decapping enzyme that removes the entire cap structure of m7G capped or incompletely capped RNAs and mediates their subsequent degradation. Specifically degrades pre-mRNAs with a defective 5'-end m7G cap and is part of a pre-mRNA capping quality control. Has decapping activity toward incomplete 5'-end m7G cap mRNAs such as unmethylated 5'-end-capped RNA (cap0), while it has no activity toward 2'-O-ribose methylated m7G cap (cap1). In contrast to canonical decapping enzymes DCP2 and NUDT16, which cleave the cap within the triphosphate linkage, the decapping activity releases the entire cap structure GpppN and a 5'-end monophosphate RNA. Also has 5'-3' exoribonuclease activities: The 5'-end monophosphate RNA is then degraded by the 5'-3' exoribonuclease activity, enabling this enzyme to decap and degrade incompletely capped mRNAs. Also possesses RNA 5'-pyrophosphohydrolase activity by hydrolyzing the 5'-end triphosphate to release pyrophosphates. Exhibits decapping activity towards FAD-capped RNAs. Exhibits decapping activity towards dpCoA-capped RNAs in vitro. The protein is Decapping and exoribonuclease protein of Homo sapiens (Human).